The following is a 189-amino-acid chain: Glycerol-3-phosphate acyltransferase (189 aa).

5 consecutive transmembrane segments (helical) span residues 1-21, 50-70, 72-92, 111-131, and 151-171; these read MVWL…AVLL, KLAI…VLVA, WLGL…IGHL, MLLG…LLTF, and LLAW…ALIV.

Belongs to the PlsY family. In terms of assembly, probably interacts with PlsX.

It is found in the cell inner membrane. It catalyses the reaction an acyl phosphate + sn-glycerol 3-phosphate = a 1-acyl-sn-glycero-3-phosphate + phosphate. It functions in the pathway lipid metabolism; phospholipid metabolism. Catalyzes the transfer of an acyl group from acyl-phosphate (acyl-PO(4)) to glycerol-3-phosphate (G3P) to form lysophosphatidic acid (LPA). This enzyme utilizes acyl-phosphate as fatty acyl donor, but not acyl-CoA or acyl-ACP. The protein is Glycerol-3-phosphate acyltransferase of Pseudomonas paraeruginosa (strain DSM 24068 / PA7) (Pseudomonas aeruginosa (strain PA7)).